Here is a 446-residue protein sequence, read N- to C-terminus: Histidine--tRNA ligase (446 aa).

It belongs to the class-II aminoacyl-tRNA synthetase family. As to quaternary structure, homodimer.

It is found in the cytoplasm. The enzyme catalyses tRNA(His) + L-histidine + ATP = L-histidyl-tRNA(His) + AMP + diphosphate + H(+). In Burkholderia lata (strain ATCC 17760 / DSM 23089 / LMG 22485 / NCIMB 9086 / R18194 / 383), this protein is Histidine--tRNA ligase.